A 440-amino-acid chain; its full sequence is tRNA modification GTPase MnmE (440 aa).

Arg22, Glu79, and Lys118 together coordinate (6S)-5-formyl-5,6,7,8-tetrahydrofolate. One can recognise a TrmE-type G domain in the interval 214 to 366 (GLIFTILGKP…LKTMLEAEAR (153 aa)). GTP-binding positions include 224–229 (NAGKSS), 243–249 (SSQPGTT), and 268–271 (DTAG). Residues Ser228 and Thr249 each contribute to the Mg(2+) site. Lys440 lines the (6S)-5-formyl-5,6,7,8-tetrahydrofolate pocket.

This sequence belongs to the TRAFAC class TrmE-Era-EngA-EngB-Septin-like GTPase superfamily. TrmE GTPase family. In terms of assembly, homodimer. Heterotetramer of two MnmE and two MnmG subunits. Requires K(+) as cofactor.

The protein localises to the cytoplasm. Exhibits a very high intrinsic GTPase hydrolysis rate. Involved in the addition of a carboxymethylaminomethyl (cmnm) group at the wobble position (U34) of certain tRNAs, forming tRNA-cmnm(5)s(2)U34. This is tRNA modification GTPase MnmE from Granulibacter bethesdensis (strain ATCC BAA-1260 / CGDNIH1).